Consider the following 415-residue polypeptide: Gamma-glutamyl phosphate reductase (415 aa).

It belongs to the gamma-glutamyl phosphate reductase family.

It localises to the cytoplasm. The enzyme catalyses L-glutamate 5-semialdehyde + phosphate + NADP(+) = L-glutamyl 5-phosphate + NADPH + H(+). Its pathway is amino-acid biosynthesis; L-proline biosynthesis; L-glutamate 5-semialdehyde from L-glutamate: step 2/2. Functionally, catalyzes the NADPH-dependent reduction of L-glutamate 5-phosphate into L-glutamate 5-semialdehyde and phosphate. The product spontaneously undergoes cyclization to form 1-pyrroline-5-carboxylate. The sequence is that of Gamma-glutamyl phosphate reductase from Mycobacterium sp. (strain JLS).